Reading from the N-terminus, the 400-residue chain is Phosphoglycerate kinase (400 aa).

Substrate-binding positions include 23–25 (DLN), Arg-38, 61–64 (HFGR), Arg-120, and Arg-153. Residues Lys-203, Glu-325, and 355-358 (GGDT) contribute to the ATP site.

The protein belongs to the phosphoglycerate kinase family. In terms of assembly, monomer.

The protein resides in the cytoplasm. The enzyme catalyses (2R)-3-phosphoglycerate + ATP = (2R)-3-phospho-glyceroyl phosphate + ADP. The protein operates within carbohydrate degradation; glycolysis; pyruvate from D-glyceraldehyde 3-phosphate: step 2/5. This chain is Phosphoglycerate kinase, found in Allorhizobium ampelinum (strain ATCC BAA-846 / DSM 112012 / S4) (Agrobacterium vitis (strain S4)).